The primary structure comprises 167 residues: 3-isopropylmalate dehydratase small subunit (167 aa).

This sequence belongs to the LeuD family. LeuD type 2 subfamily. As to quaternary structure, heterodimer of LeuC and LeuD.

It catalyses the reaction (2R,3S)-3-isopropylmalate = (2S)-2-isopropylmalate. Its pathway is amino-acid biosynthesis; L-leucine biosynthesis; L-leucine from 3-methyl-2-oxobutanoate: step 2/4. Catalyzes the isomerization between 2-isopropylmalate and 3-isopropylmalate, via the formation of 2-isopropylmaleate. The protein is 3-isopropylmalate dehydratase small subunit of Nitratidesulfovibrio vulgaris (strain ATCC 29579 / DSM 644 / CCUG 34227 / NCIMB 8303 / VKM B-1760 / Hildenborough) (Desulfovibrio vulgaris).